Here is a 139-residue protein sequence, read N- to C-terminus: Small ribosomal subunit protein bS6 (139 aa).

The interval 119-139 (LKGASKVETPTGPESTDIQEK) is disordered. A compositionally biased stretch (polar residues) spans 130-139 (GPESTDIQEK).

It belongs to the bacterial ribosomal protein bS6 family.

Binds together with bS18 to 16S ribosomal RNA. This Borreliella burgdorferi (strain ZS7) (Borrelia burgdorferi) protein is Small ribosomal subunit protein bS6.